Reading from the N-terminus, the 110-residue chain is Flagellar hook-basal body complex protein FliE (110 aa).

The protein belongs to the FliE family.

It localises to the bacterial flagellum basal body. This is Flagellar hook-basal body complex protein FliE from Pseudomonas putida (strain GB-1).